The chain runs to 567 residues: Glutamine--tRNA ligase (567 aa).

Positions 47–57 match the 'HIGH' region motif; it reads PEPNGYLHIGH. ATP is bound by residues 48-50 and 54-60; these read EPN and HIGHAKS. 2 residues coordinate L-glutamine: aspartate 80 and tyrosine 225. ATP-binding positions include threonine 244 and 274-275; that span reads RL. A 'KMSKS' region motif is present at residues 281–285; the sequence is ITSKR.

The protein belongs to the class-I aminoacyl-tRNA synthetase family. Monomer.

It is found in the cytoplasm. It catalyses the reaction tRNA(Gln) + L-glutamine + ATP = L-glutaminyl-tRNA(Gln) + AMP + diphosphate. The polypeptide is Glutamine--tRNA ligase (Pseudomonas putida (strain ATCC 47054 / DSM 6125 / CFBP 8728 / NCIMB 11950 / KT2440)).